The primary structure comprises 599 residues: Aspartate--tRNA(Asp/Asn) ligase (599 aa).

Glu-173 contributes to the L-aspartate binding site. The tract at residues 197–200 is aspartate; sequence QLFK. Arg-219 is a binding site for L-aspartate. ATP contacts are provided by residues 219–221 and Gln-228; that span reads RDE. His-449 provides a ligand contact to L-aspartate. Glu-482 serves as a coordination point for ATP. Position 489 (Arg-489) interacts with L-aspartate. 534-537 contacts ATP; that stretch reads GLDR.

This sequence belongs to the class-II aminoacyl-tRNA synthetase family. Type 1 subfamily. In terms of assembly, homodimer.

It localises to the cytoplasm. The enzyme catalyses tRNA(Asx) + L-aspartate + ATP = L-aspartyl-tRNA(Asx) + AMP + diphosphate. Its function is as follows. Aspartyl-tRNA synthetase with relaxed tRNA specificity since it is able to aspartylate not only its cognate tRNA(Asp) but also tRNA(Asn). Reaction proceeds in two steps: L-aspartate is first activated by ATP to form Asp-AMP and then transferred to the acceptor end of tRNA(Asp/Asn). The protein is Aspartate--tRNA(Asp/Asn) ligase of Marinobacter nauticus (strain ATCC 700491 / DSM 11845 / VT8) (Marinobacter aquaeolei).